The sequence spans 299 residues: Bifunctional methyltransferase-like/endonuclease (299 aa).

The interval 1–80 (MLSSKLLDIN…NLIVSPMQKA (80 aa)) is probable methylated-DNA--protein-cysteine methyltransferase-like. Positions 81 to 299 (LLEKEVKIIG…GRGDSNPGRD (219 aa)) are endonuclease V. Residues aspartate 135 and asparagine 197 each contribute to the Mg(2+) site.

The protein in the N-terminal section; belongs to the MGMT family. It in the C-terminal section; belongs to the endonuclease V family. Mg(2+) serves as cofactor.

The protein localises to the cytoplasm. It carries out the reaction Endonucleolytic cleavage at apurinic or apyrimidinic sites to products with a 5'-phosphate.. Functionally, DNA repair enzyme involved in the repair of deaminated bases. Selectively cleaves double-stranded DNA at the second phosphodiester bond 3' to a deoxyinosine leaving behind the intact lesion on the nicked DNA. The chain is Bifunctional methyltransferase-like/endonuclease from Nanoarchaeum equitans (strain Kin4-M).